Here is a 159-residue protein sequence, read N- to C-terminus: Endoribonuclease YbeY (159 aa).

His-125, His-129, and His-135 together coordinate Zn(2+).

It belongs to the endoribonuclease YbeY family. Zn(2+) serves as cofactor.

It localises to the cytoplasm. Functionally, single strand-specific metallo-endoribonuclease involved in late-stage 70S ribosome quality control and in maturation of the 3' terminus of the 16S rRNA. The sequence is that of Endoribonuclease YbeY from Limosilactobacillus reuteri (strain DSM 20016) (Lactobacillus reuteri).